The primary structure comprises 118 residues: Aspartate 1-decarboxylase (118 aa).

S25 serves as the catalytic Schiff-base intermediate with substrate; via pyruvic acid. S25 is modified (pyruvic acid (Ser)). T57 lines the substrate pocket. The Proton donor role is filled by Y58. 73-75 (GAA) is a binding site for substrate.

Belongs to the PanD family. In terms of assembly, heterooctamer of four alpha and four beta subunits. The cofactor is pyruvate. In terms of processing, is synthesized initially as an inactive proenzyme, which is activated by self-cleavage at a specific serine bond to produce a beta-subunit with a hydroxyl group at its C-terminus and an alpha-subunit with a pyruvoyl group at its N-terminus.

The protein resides in the cytoplasm. It carries out the reaction L-aspartate + H(+) = beta-alanine + CO2. It participates in cofactor biosynthesis; (R)-pantothenate biosynthesis; beta-alanine from L-aspartate: step 1/1. Its function is as follows. Catalyzes the pyruvoyl-dependent decarboxylation of aspartate to produce beta-alanine. This Syntrophomonas wolfei subsp. wolfei (strain DSM 2245B / Goettingen) protein is Aspartate 1-decarboxylase.